A 197-amino-acid chain; its full sequence is Mediator of RNA polymerase II transcription subunit 21 (197 aa).

Residues 37–112 (PPPSVPSAVP…APPRPDSPNT (76 aa)) form a disordered region. 2 stretches are compositionally biased toward low complexity: residues 60–70 (PTSGTATNTPG) and 90–100 (PQMQQQHQEQP). A coiled-coil region spans residues 140-183 (GIKSSEAEQQERIKQLAEELRVVEEERSARRRELRRLGEKVDGL).

This sequence belongs to the Mediator complex subunit 21 family. As to quaternary structure, component of the Mediator complex.

It is found in the nucleus. In terms of biological role, component of the Mediator complex, a coactivator involved in the regulated transcription of nearly all RNA polymerase II-dependent genes. Mediator functions as a bridge to convey information from gene-specific regulatory proteins to the basal RNA polymerase II transcription machinery. Mediator is recruited to promoters by direct interactions with regulatory proteins and serves as a scaffold for the assembly of a functional preinitiation complex with RNA polymerase II and the general transcription factors. The sequence is that of Mediator of RNA polymerase II transcription subunit 21 (SRB7) from Coccidioides immitis (strain RS) (Valley fever fungus).